The chain runs to 123 residues: Ribosome-binding factor A (123 aa).

Belongs to the RbfA family. In terms of assembly, monomer. Binds 30S ribosomal subunits, but not 50S ribosomal subunits or 70S ribosomes.

It is found in the cytoplasm. Functionally, one of several proteins that assist in the late maturation steps of the functional core of the 30S ribosomal subunit. Associates with free 30S ribosomal subunits (but not with 30S subunits that are part of 70S ribosomes or polysomes). Required for efficient processing of 16S rRNA. May interact with the 5'-terminal helix region of 16S rRNA. The polypeptide is Ribosome-binding factor A (Acetivibrio thermocellus (strain ATCC 27405 / DSM 1237 / JCM 9322 / NBRC 103400 / NCIMB 10682 / NRRL B-4536 / VPI 7372) (Clostridium thermocellum)).